The sequence spans 510 residues: Light-independent protochlorophyllide reductase subunit B (510 aa).

A [4Fe-4S] cluster-binding site is contributed by D36. The Proton donor role is filled by D296. 431–432 (GM) contributes to the substrate binding site.

Belongs to the ChlB/BchB/BchZ family. As to quaternary structure, protochlorophyllide reductase is composed of three subunits; ChlL, ChlN and ChlB. Forms a heterotetramer of two ChlB and two ChlN subunits. [4Fe-4S] cluster is required as a cofactor.

It carries out the reaction chlorophyllide a + oxidized 2[4Fe-4S]-[ferredoxin] + 2 ADP + 2 phosphate = protochlorophyllide a + reduced 2[4Fe-4S]-[ferredoxin] + 2 ATP + 2 H2O. It functions in the pathway porphyrin-containing compound metabolism; chlorophyll biosynthesis (light-independent). Its function is as follows. Component of the dark-operative protochlorophyllide reductase (DPOR) that uses Mg-ATP and reduced ferredoxin to reduce ring D of protochlorophyllide (Pchlide) to form chlorophyllide a (Chlide). This reaction is light-independent. The NB-protein (ChlN-ChlB) is the catalytic component of the complex. The chain is Light-independent protochlorophyllide reductase subunit B from Synechococcus sp. (strain JA-3-3Ab) (Cyanobacteria bacterium Yellowstone A-Prime).